A 387-amino-acid polypeptide reads, in one-letter code: Gamma-butyrobetaine dioxygenase (387 aa).

4 residues coordinate Zn(2+): Cys38, Cys40, Cys43, and His82. Residues His202, Asp204, and His347 each coordinate Fe cation. Residue Ser351 is modified to Phosphoserine.

It belongs to the gamma-BBH/TMLD family. Fe(2+) serves as cofactor. Requires L-ascorbate as cofactor. Expressed in the liver and in some extend in the testis and the epididymis.

The protein localises to the cytoplasm. The enzyme catalyses 4-(trimethylamino)butanoate + 2-oxoglutarate + O2 = carnitine + succinate + CO2. It functions in the pathway amine and polyamine biosynthesis; carnitine biosynthesis. Its function is as follows. Catalyzes the formation of L-carnitine from gamma-butyrobetaine. The chain is Gamma-butyrobetaine dioxygenase (Bbox1) from Rattus norvegicus (Rat).